We begin with the raw amino-acid sequence, 513 residues long: Probable vesicular acetylcholine transporter-A (513 aa).

Over 1-39 the chain is Cytoplasmic; the sequence is MATEESGGLAQTAAVKLSEMGERTKQLGNAIQDPERQRR. The chain crosses the membrane as a helical span at residues 40–60; it reads IILVIVCVALLLDNMLYMVIV. Over 61–98 the chain is Lumenal, vesicle; it reads PIVPDYLAHLESESEQAHVKGNSSINITQNENFDLQIG. Residues Asn82 and Asn86 are each glycosylated (N-linked (GlcNAc...) asparagine). A helical transmembrane segment spans residues 99 to 119; sequence VLFASKAILQLLVNPLTGTFI. Residues 120-125 are Cytoplasmic-facing; it reads DRVGYD. Residues 126–146 traverse the membrane as a helical segment; it reads IPLLIGLSIMFVSTCIFAFAE. The Lumenal, vesicle portion of the chain corresponds to 147–156; the sequence is NYATLFMARS. A helical membrane pass occupies residues 157–174; the sequence is LQGLGSAFADTSGIAMIA. At 175-186 the chain is on the cytoplasmic side; the sequence is DKYAEESERSRA. Residues 187-207 form a helical membrane-spanning segment; the sequence is LGIALAFISFGSLAAPPFGGV. The Lumenal, vesicle portion of the chain corresponds to 208–215; sequence LYEFAGKR. Residues 216-236 traverse the membrane as a helical segment; the sequence is FPFIALACVCLADGILCLTVL. Over 237-257 the chain is Cytoplasmic; that stretch reads KPFSSRTRENMPVGTPIYKLM. A helical transmembrane segment spans residues 258 to 278; that stretch reads IDPYIAVVAGALTTCNIPLAF. Residues 279 to 296 are Lumenal, vesicle-facing; sequence LEPTIANWMEETMNASQW. Residue Asn292 is glycosylated (N-linked (GlcNAc...) asparagine). The chain crosses the membrane as a helical span at residues 297–317; sequence QIGITWLPAFFPHILGVYLTV. The Cytoplasmic portion of the chain corresponds to 318–327; the sequence is KLAAKYPHLQ. Residues 328–348 form a helical membrane-spanning segment; that stretch reads WFYGALGMVIIGASSCIVPAC. Topologically, residues 349–353 are lumenal, vesicle; it reads KNFEQ. Residues 354 to 374 traverse the membrane as a helical segment; it reads LIIPLCGVCFGIALVDTALLP. At 375 to 390 the chain is on the cytoplasmic side; that stretch reads TLAFLVDVRHVSVYGS. The helical transmembrane segment at 391–411 threads the bilayer; sequence VYAIADISYCVAYALGPIVAG. Residues 412-418 are Lumenal, vesicle-facing; the sequence is KIVHDLG. The helical transmembrane segment at 419-439 threads the bilayer; sequence FVQLNLGMGLANVLYAPALLL. Residues 440–513 are Cytoplasmic-facing; it reads LRNVSLMKPS…EEETSEPEYI (74 aa). A disordered region spans residues 475–513; that stretch reads RKKHGYSSSGNCVPIDENGTFAGQSKSFSEEETSEPEYI. Over residues 504-513 the composition is skewed to acidic residues; sequence EEETSEPEYI.

The protein belongs to the major facilitator superfamily. Vesicular transporter family.

It localises to the membrane. Involved in acetylcholine transport into synaptic vesicles. The sequence is that of Probable vesicular acetylcholine transporter-A from Danio rerio (Zebrafish).